A 264-amino-acid chain; its full sequence is Ribosomal RNA small subunit methyltransferase A (264 aa).

Positions 15, 17, 42, 64, 90, and 109 each coordinate S-adenosyl-L-methionine.

This sequence belongs to the class I-like SAM-binding methyltransferase superfamily. rRNA adenine N(6)-methyltransferase family. RsmA subfamily.

It is found in the cytoplasm. The catalysed reaction is adenosine(1518)/adenosine(1519) in 16S rRNA + 4 S-adenosyl-L-methionine = N(6)-dimethyladenosine(1518)/N(6)-dimethyladenosine(1519) in 16S rRNA + 4 S-adenosyl-L-homocysteine + 4 H(+). In terms of biological role, specifically dimethylates two adjacent adenosines (A1518 and A1519) in the loop of a conserved hairpin near the 3'-end of 16S rRNA in the 30S particle. May play a critical role in biogenesis of 30S subunits. The polypeptide is Ribosomal RNA small subunit methyltransferase A (Wolbachia pipientis subsp. Culex pipiens (strain wPip)).